An 86-amino-acid chain; its full sequence is Small ribosomal subunit protein bS20 (86 aa).

A compositionally biased stretch (basic and acidic residues) spans M1 to R18. The disordered stretch occupies residues M1–K25.

This sequence belongs to the bacterial ribosomal protein bS20 family.

In terms of biological role, binds directly to 16S ribosomal RNA. This chain is Small ribosomal subunit protein bS20, found in Mycobacteroides abscessus (strain ATCC 19977 / DSM 44196 / CCUG 20993 / CIP 104536 / JCM 13569 / NCTC 13031 / TMC 1543 / L948) (Mycobacterium abscessus).